The following is a 553-amino-acid chain: CTP synthase (553 aa).

The tract at residues methionine 1 to leucine 278 is amidoligase domain. Residue serine 25 coordinates CTP. A UTP-binding site is contributed by serine 25. ATP contacts are provided by residues serine 26–leucine 31 and aspartate 83. 2 residues coordinate Mg(2+): aspartate 83 and glutamate 152. Residues aspartate 159–glutamate 161, lysine 199–glutamine 204, and lysine 235 each bind CTP. UTP is bound by residues lysine 199 to glutamine 204 and lysine 235. One can recognise a Glutamine amidotransferase type-1 domain in the interval asparagine 303–alanine 552. Glycine 366 lines the L-glutamine pocket. The Nucleophile; for glutamine hydrolysis role is filled by cysteine 393. L-glutamine is bound by residues leucine 394–glutamine 397, glutamate 417, and arginine 478. Residues histidine 525 and glutamate 527 contribute to the active site.

Belongs to the CTP synthase family. Homotetramer.

The catalysed reaction is UTP + L-glutamine + ATP + H2O = CTP + L-glutamate + ADP + phosphate + 2 H(+). It carries out the reaction L-glutamine + H2O = L-glutamate + NH4(+). It catalyses the reaction UTP + NH4(+) + ATP = CTP + ADP + phosphate + 2 H(+). Its pathway is pyrimidine metabolism; CTP biosynthesis via de novo pathway; CTP from UDP: step 2/2. Its activity is regulated as follows. Allosterically activated by GTP, when glutamine is the substrate; GTP has no effect on the reaction when ammonia is the substrate. The allosteric effector GTP functions by stabilizing the protein conformation that binds the tetrahedral intermediate(s) formed during glutamine hydrolysis. Inhibited by the product CTP, via allosteric rather than competitive inhibition. In terms of biological role, catalyzes the ATP-dependent amination of UTP to CTP with either L-glutamine or ammonia as the source of nitrogen. Regulates intracellular CTP levels through interactions with the four ribonucleotide triphosphates. This Bifidobacterium longum (strain NCC 2705) protein is CTP synthase.